A 355-amino-acid chain; its full sequence is Syntaxin-5 (355 aa).

Residues 1–333 lie on the Cytoplasmic side of the membrane; sequence MIPRKRYGSK…KYFQSVTSNR (333 aa). The IxM motif; signal for cargo packaging into COPII-coated vesicles motif lies at 245 to 247; that stretch reads IDM. A t-SNARE coiled-coil homology domain is found at 263 to 325; sequence DSYIQSRADT…EAAHSEILKY (63 aa). The stretch at 287 to 318 forms a coiled coil; that stretch reads FQQLAHMVKEQEETIQRIDENVLGAQLDVEAA. The chain crosses the membrane as a helical; Anchor for type IV membrane protein span at residues 334–354; the sequence is WLMVKIFLILIVFFIIFVVFL. A355 is a topological domain (vesicular).

The protein belongs to the syntaxin family. Part of a ternary complex containing STX5A, NSFL1C and VCP. Part of a unique SNARE complex composed of the Golgi SNAREs GOSR1, GOSR2, YKT6 and VTI1A. Component of a SNARE complex consisting of STX5, YKT6, GOSR1 and BET1L. Interacts with BET1L. Interacts with BET1. Interacts with COG4. Interacts with GM130/GOLGA2. Interacts (via IxM motif) with SEC24C and SEC24D; mediates STX5 packaging into COPII-coated vesicles. Interacts with VLDLR; this interaction mediates VLDLR translocation from the endoplasmic reticulum to the plasma membrane.

Its subcellular location is the endoplasmic reticulum-Golgi intermediate compartment membrane. It localises to the golgi apparatus membrane. Functionally, mediates endoplasmic reticulum to Golgi transport. Together with p115/USO1 and GM130/GOLGA2, involved in vesicle tethering and fusion at the cis-Golgi membrane to maintain the stacked and inter-connected structure of the Golgi apparatus. In terms of biological role, required for Golgi to endoplasmic reticulum retrogade transport, and for intra-Golgi transport. The chain is Syntaxin-5 (Stx5) from Mus musculus (Mouse).